The sequence spans 212 residues: MFNSSSLNVYFICGTQDVPEGKDIREILKQALEAGITLFQFREKGPTSLDGVEKEHLAIDLLKLCHDYQVPFIVNDDVDLAEKINADGIHVGQDDENVKSFAERFKDKIIGLSIGNEKEYYHSDLEHVDYIGVGPMFATISKNDANAPVGPSMIATLKNINPSLPMVAIGGITEDNIEPIAQNGADGVSVISAIARSHNIDKTVTKMKSYFK.

Residues 40 to 44 (QFREK) and N75 each bind 4-amino-2-methyl-5-(diphosphooxymethyl)pyrimidine. Mg(2+) is bound by residues D76 and D95. S113 provides a ligand contact to 4-amino-2-methyl-5-(diphosphooxymethyl)pyrimidine. 139–141 (TIS) contacts 2-[(2R,5Z)-2-carboxy-4-methylthiazol-5(2H)-ylidene]ethyl phosphate. Residue K142 coordinates 4-amino-2-methyl-5-(diphosphooxymethyl)pyrimidine. Residues G171 and 191–192 (IS) each bind 2-[(2R,5Z)-2-carboxy-4-methylthiazol-5(2H)-ylidene]ethyl phosphate.

This sequence belongs to the thiamine-phosphate synthase family. Requires Mg(2+) as cofactor.

The catalysed reaction is 2-[(2R,5Z)-2-carboxy-4-methylthiazol-5(2H)-ylidene]ethyl phosphate + 4-amino-2-methyl-5-(diphosphooxymethyl)pyrimidine + 2 H(+) = thiamine phosphate + CO2 + diphosphate. The enzyme catalyses 2-(2-carboxy-4-methylthiazol-5-yl)ethyl phosphate + 4-amino-2-methyl-5-(diphosphooxymethyl)pyrimidine + 2 H(+) = thiamine phosphate + CO2 + diphosphate. It catalyses the reaction 4-methyl-5-(2-phosphooxyethyl)-thiazole + 4-amino-2-methyl-5-(diphosphooxymethyl)pyrimidine + H(+) = thiamine phosphate + diphosphate. It participates in cofactor biosynthesis; thiamine diphosphate biosynthesis; thiamine phosphate from 4-amino-2-methyl-5-diphosphomethylpyrimidine and 4-methyl-5-(2-phosphoethyl)-thiazole: step 1/1. Condenses 4-methyl-5-(beta-hydroxyethyl)thiazole monophosphate (THZ-P) and 2-methyl-4-amino-5-hydroxymethyl pyrimidine pyrophosphate (HMP-PP) to form thiamine monophosphate (TMP). This chain is Thiamine-phosphate synthase, found in Staphylococcus haemolyticus (strain JCSC1435).